The sequence spans 156 residues: Protein-export protein SecB (156 aa).

It belongs to the SecB family. As to quaternary structure, homotetramer, a dimer of dimers. One homotetramer interacts with 1 SecA dimer.

The protein localises to the cytoplasm. Its function is as follows. One of the proteins required for the normal export of preproteins out of the cell cytoplasm. It is a molecular chaperone that binds to a subset of precursor proteins, maintaining them in a translocation-competent state. It also specifically binds to its receptor SecA. This Aliivibrio fischeri (strain ATCC 700601 / ES114) (Vibrio fischeri) protein is Protein-export protein SecB.